The following is an 88-amino-acid chain: Small ribosomal subunit protein bS20 (88 aa).

Over residues Met-1–Arg-23 the composition is skewed to basic and acidic residues. 2 disordered regions span residues Met-1 to Val-28 and Pro-69 to Lys-88. The span at Asn-71 to Lys-81 shows a compositional bias: basic residues.

This sequence belongs to the bacterial ribosomal protein bS20 family.

Functionally, binds directly to 16S ribosomal RNA. The chain is Small ribosomal subunit protein bS20 from Dehalococcoides mccartyi (strain ATCC BAA-2266 / KCTC 15142 / 195) (Dehalococcoides ethenogenes (strain 195)).